Consider the following 385-residue polypeptide: Telomere-binding protein subunit beta (385 aa).

2 disordered regions span residues 231-329 and 343-385; these read AADH…ALTT and WHEK…AAKK. Positions 242–262 are enriched in basic residues; it reads GGAKGKGKAAAKAAKGKKLSA. Residues 263-280 show a composition bias toward basic and acidic residues; it reads KKGDSSAADVRKSVDKIV. 3 stretches are compositionally biased toward low complexity: residues 295 to 304, 312 to 326, and 365 to 375; these read KSQAPAAGKS, KAVPSAPSPSGKKSA, and GKASATSGKAS. Residues 376 to 385 are compositionally biased toward basic residues; sequence KASKKTAAKK.

As to quaternary structure, heterodimer of an alpha and a beta subunit.

It localises to the nucleus. Its subcellular location is the chromosome. The protein resides in the telomere. In terms of biological role, may function as protective capping of the single-stranded telomeric overhang. May also participate in telomere length regulation during DNA replication. Binds specifically to the T4G4-containing extension on the 3'strand and protects this region of the telomere from nuclease digestion and chemical modification. The protein is Telomere-binding protein subunit beta (MAC-41A) of Sterkiella nova (Ciliate).